We begin with the raw amino-acid sequence, 71 residues long: U3-agatoxin-Ao1a (71 aa).

The first 20 residues, 1-20, serve as a signal peptide directing secretion; the sequence is MKAVIFFCLLSVMVFTVIEA. Positions 21 to 33 are excised as a propeptide; the sequence is VKEEGTKPAEAAR. 4 disulfide bridges follow: Cys35/Cys51, Cys42/Cys56, Cys50/Cys66, and Cys58/Cys64. Position 70 is a serine amide (Ser70).

It belongs to the neurotoxin 07 (Beta/delta-agtx) family. 01 (aga-2) subfamily. Expressed by the venom gland.

The protein resides in the secreted. In terms of biological role, insecticidal neurotoxin that modulates the insect Nav channel (DmNaV1/tipE (para/tipE)) in a unique manner, with both the activation and inactivation processes being affected. The voltage dependence of activation is shifted toward more hyperpolarized potentials (analogous to site 4 toxins) and a non-inactivating persistent sodium current is induced (site 3-like action). Interestingly, both effects take place in a voltage-dependent manner, producing a bell-shaped curve between -80 and 0 mV. Compared to beta/delta-agatoxin-1 to -3, this toxin appears to affect the insect sodium channel only weakly. The polypeptide is U3-agatoxin-Ao1a (Agelena orientalis (Funnel-web spider)).